The primary structure comprises 225 residues: Peptidyl-tRNA hydrolase (225 aa).

Tyr-14 serves as a coordination point for tRNA. His-19 functions as the Proton acceptor in the catalytic mechanism. Residues Phe-64, Asn-66, and Asn-112 each coordinate tRNA. Residues 182–225 (AVALRMQPPKPEKPKPAAKAPEAQAPEAAPDERSALQKLADRFR) are disordered. Residues 198-209 (AAKAPEAQAPEA) are compositionally biased toward low complexity. The segment covering 211–225 (PDERSALQKLADRFR) has biased composition (basic and acidic residues).

The protein belongs to the PTH family. As to quaternary structure, monomer.

The protein localises to the cytoplasm. The enzyme catalyses an N-acyl-L-alpha-aminoacyl-tRNA + H2O = an N-acyl-L-amino acid + a tRNA + H(+). Its function is as follows. Hydrolyzes ribosome-free peptidyl-tRNAs (with 1 or more amino acids incorporated), which drop off the ribosome during protein synthesis, or as a result of ribosome stalling. Catalyzes the release of premature peptidyl moieties from peptidyl-tRNA molecules trapped in stalled 50S ribosomal subunits, and thus maintains levels of free tRNAs and 50S ribosomes. This is Peptidyl-tRNA hydrolase from Cereibacter sphaeroides (strain ATCC 17029 / ATH 2.4.9) (Rhodobacter sphaeroides).